A 394-amino-acid polypeptide reads, in one-letter code: Probable peptidoglycan glycosyltransferase FtsW (394 aa).

Topologically, residues methionine 1 to tryptophan 26 are cytoplasmic. Residues leucine 27–valine 47 traverse the membrane as a helical segment. The Periplasmic segment spans residues methionine 48–proline 57. Residues phenylalanine 58 to valine 78 form a helical membrane-spanning segment. Over valine 79–lysine 88 the chain is Cytoplasmic. Residues isoleucine 89–isoleucine 109 form a helical membrane-spanning segment. Topologically, residues glycine 110–arginine 118 are periplasmic. Residues tryptophan 119–phenylalanine 139 form a helical membrane-spanning segment. The Cytoplasmic portion of the chain corresponds to tyrosine 140–glutamate 154. The helical transmembrane segment at serine 155–leucine 175 threads the bilayer. Topologically, residues glutamate 176–proline 177 are periplasmic. The chain crosses the membrane as a helical span at residues aspartate 178 to valine 198. Residues lysine 199–arginine 201 lie on the Cytoplasmic side of the membrane. Residues tyrosine 202 to proline 222 form a helical membrane-spanning segment. At tyrosine 223–aspartate 278 the chain is on the periplasmic side. The chain crosses the membrane as a helical span at residues phenylalanine 279 to leucine 299. Residues tyrosine 300–tyrosine 327 are Cytoplasmic-facing. A helical transmembrane segment spans residues glycine 328–leucine 348. Over proline 349–threonine 354 the chain is Periplasmic. The chain crosses the membrane as a helical span at residues leucine 355–leucine 375. The Cytoplasmic segment spans residues leucine 376 to alanine 394.

It belongs to the SEDS family. FtsW subfamily.

It is found in the cell inner membrane. The enzyme catalyses [GlcNAc-(1-&gt;4)-Mur2Ac(oyl-L-Ala-gamma-D-Glu-L-Lys-D-Ala-D-Ala)](n)-di-trans,octa-cis-undecaprenyl diphosphate + beta-D-GlcNAc-(1-&gt;4)-Mur2Ac(oyl-L-Ala-gamma-D-Glu-L-Lys-D-Ala-D-Ala)-di-trans,octa-cis-undecaprenyl diphosphate = [GlcNAc-(1-&gt;4)-Mur2Ac(oyl-L-Ala-gamma-D-Glu-L-Lys-D-Ala-D-Ala)](n+1)-di-trans,octa-cis-undecaprenyl diphosphate + di-trans,octa-cis-undecaprenyl diphosphate + H(+). The protein operates within cell wall biogenesis; peptidoglycan biosynthesis. Peptidoglycan polymerase that is essential for cell division. This chain is Probable peptidoglycan glycosyltransferase FtsW, found in Legionella pneumophila subsp. pneumophila (strain Philadelphia 1 / ATCC 33152 / DSM 7513).